Consider the following 119-residue polypeptide: NADH-quinone oxidoreductase subunit A (119 aa).

A run of 3 helical transmembrane segments spans residues 7 to 27, 63 to 83, and 88 to 108; these read YPVL…VSIG, LVAI…PWGV, and IGWP…LGFA.

It belongs to the complex I subunit 3 family. NDH-1 is composed of 14 different subunits. Subunits NuoA, H, J, K, L, M, N constitute the membrane sector of the complex.

The protein localises to the cell inner membrane. It catalyses the reaction a quinone + NADH + 5 H(+)(in) = a quinol + NAD(+) + 4 H(+)(out). Functionally, NDH-1 shuttles electrons from NADH, via FMN and iron-sulfur (Fe-S) centers, to quinones in the respiratory chain. The immediate electron acceptor for the enzyme in this species is believed to be ubiquinone. Couples the redox reaction to proton translocation (for every two electrons transferred, four hydrogen ions are translocated across the cytoplasmic membrane), and thus conserves the redox energy in a proton gradient. In Burkholderia ambifaria (strain MC40-6), this protein is NADH-quinone oxidoreductase subunit A.